A 631-amino-acid polypeptide reads, in one-letter code: Mu-like prophage FluMu protein gp42 (631 aa).

Helical transmembrane passes span 56-76 (LGNITIPIIGVGAAAGATMVG) and 385-405 (GLADGVAGALGATVGVTPVYV). Residues 425–453 (IEDGRDKDKKTQKKNKPPRPKRGRGSVRS) form a disordered region. Residues 434–449 (KTQKKNKPPRPKRGRG) are compositionally biased toward basic residues. 3 helical membrane-spanning segments follow: residues 455 to 475 (VAAVAASAAAVPKVAAPVTTA), 495 to 515 (SKAVPYLGTGLAVAEGVTVLM), and 543 to 563 (ALIPIPVVGAAVGSYLGGWLG).

To phage Mu protein gp42.

Its subcellular location is the cell membrane. In Haemophilus influenzae (strain ATCC 51907 / DSM 11121 / KW20 / Rd), this protein is Mu-like prophage FluMu protein gp42.